The sequence spans 164 residues: Ribosome maturation factor RimP (164 aa).

Belongs to the RimP family.

It localises to the cytoplasm. In terms of biological role, required for maturation of 30S ribosomal subunits. The protein is Ribosome maturation factor RimP of Cellvibrio japonicus (strain Ueda107) (Pseudomonas fluorescens subsp. cellulosa).